The following is a 340-amino-acid chain: Peroxisomal coenzyme A diphosphatase 1, peroxisomal (340 aa).

The N-terminal 7 residues, 1–7 (MILSQRR), are a transit peptide targeting the peroxisome. The Nudix hydrolase domain maps to 37 to 199 (KRNSAVIILL…DEDVKSYQAE (163 aa)). The Nudix box signature appears at 77 to 99 (GKADYFQETFESVARREAEEEIG). Residues Glu93 and Glu97 each contribute to the Mg(2+) site.

Belongs to the Nudix hydrolase family. PCD1 subfamily. It depends on Mn(2+) as a cofactor. Requires Mg(2+) as cofactor. Post-translationally, the size of the cleaved transit peptide can be of 7 or 8 residues.

It localises to the peroxisome. It catalyses the reaction CoA + H2O = (R)-4'-phosphopantetheine + adenosine 3',5'-bisphosphate + 2 H(+). The enzyme catalyses CoA-disulfide + H2O = 4'-phosphopantetheinyl-CoA disulfide + adenosine 3',5'-bisphosphate + 2 H(+). The catalysed reaction is 8-oxo-dGTP + H2O = 8-oxo-dGMP + diphosphate + H(+). It carries out the reaction 2-oxo-dATP + H2O = 2-oxo-dAMP + diphosphate + H(+). In terms of biological role, diphosphatase (pyrophosphatase) with specificity for coenzyme A and CoA derivatives. Catalyzes the hydrolysis of the diphosphate linkage in CoA to give 3',5'-ADP and 4'-phosphopantetheine. Prefers oxidized CoA disulfide (CoASSCoA) over CoA as a substrate. May be required to remove potentially toxic oxidized CoA disulfide from peroxisomes to maintain the capacity for beta-oxidation of fatty acids. Can also hydrolyze 8-oxo-dGTP and 2-OH-dATP in vitro; therefore it may function as a sanitizing enzyme for oxidized nucleotides and may contribute to prevention of spontaneous mutagenesis due to the misincorporation of these oxidized nucleotides during DNA synthesis. Shows moderate activity in vitro with several short chain acyl-CoA esters and very low activity on 3'-dephospho-CoA while is not active with (deoxy)nucleoside 5'-triphosphates, nucleoside 5'-di- or monophosphates, diadenosine polyphosphates, nucleoside 5'-diphosphosugars, cytidine 5'-diphosphoalcohols, NAD(+), NADH, or FAD. The chain is Peroxisomal coenzyme A diphosphatase 1, peroxisomal (PCD1) from Saccharomyces cerevisiae (strain ATCC 204508 / S288c) (Baker's yeast).